The chain runs to 380 residues: Cytochrome b (380 aa).

Transmembrane regions (helical) follow at residues 33–53, 77–98, 113–133, and 178–198; these read FGSL…FLAM, WLIR…YMHI, WNIG…GYVL, and FFAF…LHLL. Residues H83 and H97 each contribute to the heme b site. Residues H182 and H196 each contribute to the heme b site. H201 contributes to the a ubiquinone binding site. A run of 4 helical transmembrane segments spans residues 226–246, 288–308, 320–340, and 347–367; these read YKDL…ALFA, LGGV…PILH, LTQF…WIGG, and FIII…VLAP.

The protein belongs to the cytochrome b family. As to quaternary structure, the cytochrome bc1 complex contains 3 respiratory subunits (MT-CYB, CYC1 and UQCRFS1), 2 core proteins (UQCRC1 and UQCRC2) and probably 6 low-molecular weight proteins. Requires heme b as cofactor.

It is found in the mitochondrion inner membrane. Component of the ubiquinol-cytochrome c reductase complex (complex III or cytochrome b-c1 complex) that is part of the mitochondrial respiratory chain. The b-c1 complex mediates electron transfer from ubiquinol to cytochrome c. Contributes to the generation of a proton gradient across the mitochondrial membrane that is then used for ATP synthesis. This Salmo salar (Atlantic salmon) protein is Cytochrome b (mt-cyb).